A 382-amino-acid polypeptide reads, in one-letter code: 2-heptyl-3-hydroxy-4(1H)-quinolone synthase (382 aa).

This sequence belongs to the 3-hydroxybenzoate 6-hydroxylase family.

The enzyme catalyses 2-heptyl-4(1H)-quinolone + NADH + O2 + H(+) = 2-heptyl-3-hydroxy-4(1H)-quinolone + NAD(+) + H2O. Involved in the terminal step of the biosynthesis of quinolone which in addition to serve as a potent signal for quorum sensing, chelates iron and promotes the formation of membrane vesicles (MVs). Catalyzes the hydroxylation of 2-heptyl-4-quinolone (C7-HHQ) to yield 2-heptyl-3-hydroxy-4-quinolone (PQS). The chain is 2-heptyl-3-hydroxy-4(1H)-quinolone synthase (pqsH) from Pseudomonas aeruginosa (strain ATCC 15692 / DSM 22644 / CIP 104116 / JCM 14847 / LMG 12228 / 1C / PRS 101 / PAO1).